The chain runs to 175 residues: S-fimbrial protein subunit SfaG (175 aa).

A signal peptide spans Met-1–Ala-27. A disulfide bridge links Cys-43 with Cys-83.

Belongs to the fimbrial protein family.

It is found in the fimbrium. Fimbriae (also called pili), polar filaments radiating from the surface of the bacterium to a length of 0.5-1.5 micrometers and numbering 100-300 per cell, enable bacteria to colonize the epithelium of specific host organs. In terms of biological role, a minor fimbrial subunit. This protein is necessary for full expression of S-specific binding. S-fimbrial adhesins enable pathogenic E.coli causing urinary-tract infections or newborn meningitis to attach to glycoproteins terminating with alpha-sialic acid-(2-3)-beta-Gal. The sequence is that of S-fimbrial protein subunit SfaG (sfaG) from Escherichia coli O6:K15:H31 (strain 536 / UPEC).